A 239-amino-acid chain; its full sequence is Trimethylguanosine synthase (239 aa).

Belongs to the methyltransferase superfamily. Trimethylguanosine synthase family. As to quaternary structure, monomer. Interacts with mug174; both proteins are required to maintain Cajal body integrity.

The protein localises to the nucleus. It localises to the cajal body. It catalyses the reaction a 5'-end (N(7)-methyl 5'-triphosphoguanosine)-ribonucleoside in snRNA + S-adenosyl-L-methionine = a 5'-end (N(2),N(7)-dimethyl 5'-triphosphoguanosine)-ribonucleoside in snRNA + S-adenosyl-L-homocysteine + H(+). It carries out the reaction a 5'-end (N(7)-methyl 5'-triphosphoguanosine)-ribonucleoside in snoRNA + S-adenosyl-L-methionine = a 5'-end (N(2),N(7)-dimethyl 5'-triphosphoguanosine)-ribonucleoside in snoRNA + S-adenosyl-L-homocysteine + H(+). The enzyme catalyses a 5'-end (N(2),N(7)-dimethyl 5'-triphosphoguanosine)-ribonucleoside in snRNA + S-adenosyl-L-methionine = a 5'-end (N(2),N(2),N(7)-trimethyl 5'-triphosphoguanosine)-ribonucleoside in snRNA + S-adenosyl-L-homocysteine + H(+). The catalysed reaction is a 5'-end (N(2),N(7)-dimethyl 5'-triphosphoguanosine)-ribonucleoside in snoRNA + S-adenosyl-L-methionine = a 5'-end (N(2),N(2),N(7)-trimethyl 5'-triphosphoguanosine)-ribonucleoside in snoRNA + S-adenosyl-L-homocysteine + H(+). With respect to regulation, substrate inhibited by S-adenosyl-L-homocysteine. Functionally, catalyzes the two serial methylation steps for the conversion of the 7-monomethylguanosine (m(7)G) caps of snRNAs and snoRNAs to a 2,2,7-trimethylguanosine (m(2,2,7)G) cap structure. The enzyme is specific for guanine, and N7 methylation must precede N2 methylation. Required for pre-mRNA splicing, pre-rRNA processing and small ribosomal subunit synthesis. Involved in nucleolar structural organization. The protein is Trimethylguanosine synthase (tgs1) of Schizosaccharomyces pombe (strain 972 / ATCC 24843) (Fission yeast).